A 419-amino-acid polypeptide reads, in one-letter code: Phospholipase A1-IIgamma (419 aa).

Coiled coils occupy residues 1 to 21 (MKRKKKEEEEEKLIVTREFAK) and 207 to 227 (NARDQVLREVGRLLEKYKDEE). Ser236 (acyl-ester intermediate) is an active-site residue. Catalysis depends on charge relay system residues Ser236, Asp302, and His339.

This sequence belongs to the AB hydrolase superfamily. Lipase family. As to expression, expressed in seedlings, stems and siliques, and, to a lower extent, in flowers.

It localises to the cytoplasm. In terms of biological role, acylhydrolase that catalyzes the hydrolysis of 1,3-diacylglycerol (1,3-DAG) and 1-monoacylglycerol (1-MAG) at the sn-1 position. High activity toward 1,3-DAG and 1-MAG, but low activity toward 1,2-diacylglycerol (1,2-DAG) and 1-lysophosphatidylcholine (1-LPC), and no activity toward phosphatidylcholine (PC), monogalactosyldiacylglycerol (MGDG), digalactosyldiacylglycerol (DGDG), triacylglycerol (TAG) and 2-monoacylglycerol (2-MAG). May be involved in the negative regulation of seedling establishment by inhibiting the breakdown, beta-oxidation and mobilization of seed storage oils. This Arabidopsis thaliana (Mouse-ear cress) protein is Phospholipase A1-IIgamma (DSEL).